A 138-amino-acid polypeptide reads, in one-letter code: Putative pre-16S rRNA nuclease (138 aa).

The protein belongs to the YqgF nuclease family.

Its subcellular location is the cytoplasm. Could be a nuclease involved in processing of the 5'-end of pre-16S rRNA. This chain is Putative pre-16S rRNA nuclease, found in Geobacillus kaustophilus (strain HTA426).